Consider the following 343-residue polypeptide: MTIDDRKIKILQAIINDYIHTGDPVGSRTIAKKYNLGVGSATIRNEMADLEDMGYLEQPHASSGRVPSNKGYRLYVDSLMENQLLTPEENLKIKQYIIDTAMLEVDKIVRQTSSLLSELTNLTCVIQTPSVNKSFIKSLQLMKVDSTTLVSVIITDAGVMKNHIIRVNSTPTIEELNKINAVINRRLVNLCIEQINLQVINQLKEDLQGYDELFNALLTPLYETLKNAADSPDLIMEGATNIFNYPEYNDIEKAKEMLSLLNDKESLRDLLKTNKDITIRIGEENYKPQAKECSIIAAEYSFGNRPIGTIGLIGPKRIDYSKVISIMAEIVKELNNILNNQSK.

The protein belongs to the HrcA family.

Negative regulator of class I heat shock genes (grpE-dnaK-dnaJ and groELS operons). Prevents heat-shock induction of these operons. In Clostridium botulinum (strain Eklund 17B / Type B), this protein is Heat-inducible transcription repressor HrcA.